The following is a 425-amino-acid chain: Histidine--tRNA ligase 1 (425 aa).

It belongs to the class-II aminoacyl-tRNA synthetase family. Homodimer.

It is found in the cytoplasm. The enzyme catalyses tRNA(His) + L-histidine + ATP = L-histidyl-tRNA(His) + AMP + diphosphate + H(+). The polypeptide is Histidine--tRNA ligase 1 (Bacillus anthracis).